Reading from the N-terminus, the 264-residue chain is Thymidylate synthase (264 aa).

R21 contributes to the dUMP binding site. H51 provides a ligand contact to (6R)-5,10-methylene-5,6,7,8-tetrahydrofolate. Residue 126 to 127 (RR) participates in dUMP binding. Residue C146 is the Nucleophile of the active site. DUMP is bound by residues 166–169 (RSCD), N177, and 207–209 (HLY). (6R)-5,10-methylene-5,6,7,8-tetrahydrofolate is bound at residue D169. A263 contacts (6R)-5,10-methylene-5,6,7,8-tetrahydrofolate.

It belongs to the thymidylate synthase family. Bacterial-type ThyA subfamily. In terms of assembly, homodimer.

The protein resides in the cytoplasm. It catalyses the reaction dUMP + (6R)-5,10-methylene-5,6,7,8-tetrahydrofolate = 7,8-dihydrofolate + dTMP. Its pathway is pyrimidine metabolism; dTTP biosynthesis. Catalyzes the reductive methylation of 2'-deoxyuridine-5'-monophosphate (dUMP) to 2'-deoxythymidine-5'-monophosphate (dTMP) while utilizing 5,10-methylenetetrahydrofolate (mTHF) as the methyl donor and reductant in the reaction, yielding dihydrofolate (DHF) as a by-product. This enzymatic reaction provides an intracellular de novo source of dTMP, an essential precursor for DNA biosynthesis. The protein is Thymidylate synthase of Salmonella typhimurium (strain LT2 / SGSC1412 / ATCC 700720).